We begin with the raw amino-acid sequence, 189 residues long: Probable hydrogen peroxide-inducible genes activator (189 aa).

An HTH lysR-type domain is found at 8–65 (PTLAGLRAFAAVAEKQHFGSAASALGVNQSTLSQALAGLESGLGVRLIERSTRRVFLT). The H-T-H motif DNA-binding region spans 25–44 (FGSAASALGVNQSTLSQALA).

The protein belongs to the LysR transcriptional regulatory family.

In terms of biological role, required for the induction the katG gene for catalase. Involved in the response to hydrogen peroxide. This Mycobacterium xenopi protein is Probable hydrogen peroxide-inducible genes activator (oxyR).